We begin with the raw amino-acid sequence, 193 residues long: Ion-translocating oxidoreductase complex subunit A (193 aa).

The next 6 helical transmembrane spans lie at 5 to 25 (LLLLVSTVLINNFVLVKFLGL), 39 to 59 (VGMGLATTFVMTLASASSYLM), 63 to 83 (ILIPLNIAYLRTLAFILVIAV), 102 to 122 (LLGIFLPLITTNCAVLGVALL), 134 to 154 (IIYGFGAAAGFSLVLILFAAM), and 171 to 191 (SIAMVTAGLMSLAFMGFTGLI).

The protein belongs to the NqrDE/RnfAE family. The complex is composed of six subunits: RnfA, RnfB, RnfC, RnfD, RnfE and RnfG.

Its subcellular location is the cell inner membrane. Functionally, part of a membrane-bound complex that couples electron transfer with translocation of ions across the membrane. This Aeromonas salmonicida (strain A449) protein is Ion-translocating oxidoreductase complex subunit A.